The chain runs to 110 residues: Glutaredoxin-1 (110 aa).

Residues 7–110 (IKHVKDLIAE…EELLEPILAN (104 aa)) enclose the Glutaredoxin domain. Residue lysine 11 forms a Glycyl lysine isopeptide (Lys-Gly) (interchain with G-Cter in ubiquitin) linkage. Residues 24-29 (KTYCPY), glutamine 63, valine 75, and 88-89 (ND) each bind glutathione. Cysteine 27 carries the S-glutathionyl cysteine; alternate modification. Cysteine 27 and cysteine 30 are joined by a disulfide.

It belongs to the glutaredoxin family.

The protein resides in the cytoplasm. It localises to the nucleus. It catalyses the reaction 2 glutathione + H2O2 = glutathione disulfide + 2 H2O. The catalysed reaction is 1-chloro-2,4-dinitrobenzene + glutathione = 2,4-dinitrophenyl-S-glutathione + chloride + H(+). It carries out the reaction RX + glutathione = an S-substituted glutathione + a halide anion + H(+). Functionally, component of the glutathione system which performs several activities such as glutathione-dependent oxidoreductase, glutathione peroxidase and glutathione S-transferase (GST) activity. The disulfide bond functions as an electron carrier in the glutathione-dependent synthesis of deoxyribonucleotides by the enzyme ribonucleotide reductase. In addition, it is also involved in reducing cytosolic protein- and non-protein-disulfides in a coupled system with glutathione reductase. Required for resistance to reactive oxygen species (ROS) by directly reducing hydroperoxides and for the detoxification of ROS-mediated damage. GRX1 is less active as an oxidoreductase than GRX2. The sequence is that of Glutaredoxin-1 (GRX1) from Saccharomyces cerevisiae (strain ATCC 204508 / S288c) (Baker's yeast).